Here is a 477-residue protein sequence, read N- to C-terminus: MAANYLHGVETIEKETGSRPVKVVKSAVIGLIGTAPIGPVNTPVQSLSDVDAAQFGPQLAGFTIPQALDAVYDYGSGTVIVINVLDPAVHKSNAANEPVTFDAATGRAKLAHPAAANLVLKNDSGGTTYAEGTDYAVDLINGVITRIKTGTIPPGATAAKATYDYADPTKVTAADIIGAVNAAGMRTGMKALKDTYNLYGYFSKILIAPAYCTQNSVSVELEAMAVQLGAIAYIDAPIGTTLAQALAGRGPAGTINFNTSSDRVRLCYPHVKVYDTATNAERLEPLSSRAAGLRARVDLDKGYWWSSSNQQLVGVTGVERPLSAMIDDPQSDVNMLNEQGITTVFSSYGSGLRLWGNRTAAWPTVTHMRNFENVRRTGDVINESLRYFSQQFVDAPIDQGLIDSLVESVNGFGRKLIGDGALLGFKAWFDPARNPKEELAAGHLLINYKYTVPPPLERLTYETEITSEYLLTLKGGN.

This sequence belongs to the myoviridae tail sheath protein family. Homomultimer.

The protein localises to the virion. The protein resides in the host cytoplasm. Its function is as follows. Polymerizes as an extended structure around the baseplate-tail tube complex. During ejection, the sheath shifts to a contracted form, thereby making the inner tail tube protrude through the host cell envelope. The polypeptide is Tail sheath protein (Burkholderia phage BcepMu (isolate -/United States/Summer/2002) (Bacteriophage BcepMu)).